The primary structure comprises 467 residues: Methylenetetrahydrofolate--tRNA-(uracil-5-)-methyltransferase TrmFO (467 aa).

10-15 (GAGLAG) lines the FAD pocket.

The protein belongs to the MnmG family. TrmFO subfamily. FAD serves as cofactor.

It localises to the cytoplasm. It catalyses the reaction uridine(54) in tRNA + (6R)-5,10-methylene-5,6,7,8-tetrahydrofolate + NADH + H(+) = 5-methyluridine(54) in tRNA + (6S)-5,6,7,8-tetrahydrofolate + NAD(+). The catalysed reaction is uridine(54) in tRNA + (6R)-5,10-methylene-5,6,7,8-tetrahydrofolate + NADPH + H(+) = 5-methyluridine(54) in tRNA + (6S)-5,6,7,8-tetrahydrofolate + NADP(+). Catalyzes the folate-dependent formation of 5-methyl-uridine at position 54 (M-5-U54) in all tRNAs. The protein is Methylenetetrahydrofolate--tRNA-(uracil-5-)-methyltransferase TrmFO of Prochlorococcus marinus (strain MIT 9515).